Reading from the N-terminus, the 1028-residue chain is Contactin-3 (1028 aa).

Residues 1–19 (MMFPWKQLILLSFIGCLGG) form the signal peptide. Ig-like C2-type domains are found at residues 26-117 (PVFI…AKLQ), 122-208 (ENFK…ARVL), 227-313 (PKIE…GRLT), 318-402 (PHWV…AELK), 408-497 (PDFS…LVVT), and 499-593 (PTRI…ADLI). Intrachain disulfides connect C50–C100, C144–C196, C249–C297, C339–C386, and C431–C479. N-linked (GlcNAc...) asparagine glycans are attached at residues N65 and N193. 3 N-linked (GlcNAc...) asparagine glycosylation sites follow: N375, N468, and N489. A disulfide bridge connects residues C521 and C577. 4 consecutive Fibronectin type-III domains span residues 600–698 (PPEN…TEEA), 703–800 (PPSE…SAEE), 805–901 (APSQ…TKKT), and 902–998 (PPSQ…TSMD). A disordered region spans residues 684–713 (GEPSLPSEKVRTEEAVPEVPPSEVNGGGGS). N-linked (GlcNAc...) asparagine glycosylation is found at N765, N860, N895, N913, N931, and N956. S1002 carries the GPI-anchor amidated serine lipid modification. The propeptide at 1003-1028 (TSAISNVHPMSSYMPIVLFLIVYVLW) is removed in mature form.

It belongs to the immunoglobulin superfamily. Contactin family. As to quaternary structure, interacts with PTPRG. As to expression, in brain, it is expressed in frontal lobe, occipital lobe, cerebellum and amygdala.

The protein resides in the cell membrane. Contactins mediate cell surface interactions during nervous system development. Has some neurite outgrowth-promoting activity. In Homo sapiens (Human), this protein is Contactin-3 (CNTN3).